Consider the following 341-residue polypeptide: S-adenosylmethionine:tRNA ribosyltransferase-isomerase (341 aa).

The protein belongs to the QueA family. As to quaternary structure, monomer.

The protein localises to the cytoplasm. The catalysed reaction is 7-aminomethyl-7-carbaguanosine(34) in tRNA + S-adenosyl-L-methionine = epoxyqueuosine(34) in tRNA + adenine + L-methionine + 2 H(+). It participates in tRNA modification; tRNA-queuosine biosynthesis. In terms of biological role, transfers and isomerizes the ribose moiety from AdoMet to the 7-aminomethyl group of 7-deazaguanine (preQ1-tRNA) to give epoxyqueuosine (oQ-tRNA). The chain is S-adenosylmethionine:tRNA ribosyltransferase-isomerase from Clostridium botulinum (strain Okra / Type B1).